The chain runs to 209 residues: Large ribosomal subunit protein bL25 (209 aa).

Positions 183 to 209 are disordered; that stretch reads TAGERPAAEPAAAPGAAPAAGPEEAEE. Residues 184–209 show a composition bias toward low complexity; that stretch reads AGERPAAEPAAAPGAAPAAGPEEAEE.

The protein belongs to the bacterial ribosomal protein bL25 family. CTC subfamily. As to quaternary structure, part of the 50S ribosomal subunit; part of the 5S rRNA/L5/L18/L25 subcomplex. Contacts the 5S rRNA. Binds to the 5S rRNA independently of L5 and L18.

In terms of biological role, this is one of the proteins that binds to the 5S RNA in the ribosome where it forms part of the central protuberance. The chain is Large ribosomal subunit protein bL25 from Pelotomaculum thermopropionicum (strain DSM 13744 / JCM 10971 / SI).